The chain runs to 315 residues: Neuroguidin (315 aa).

A2 carries the post-translational modification N-acetylalanine. A coiled-coil region spans residues S13 to A41. Residues A41–P174 are necessary for interaction with EIF4E. Phosphoserine occurs at positions 121, 142, and 143. Residues E124–K169 are disordered. The segment covering E144–S156 has biased composition (acidic residues). The stretch at Y181–V205 forms a coiled coil. A phosphoserine mark is found at S204 and S214. A disordered region spans residues D277–R315. The span at I295–R315 shows a compositional bias: basic residues.

It belongs to the SAS10 family. Part of the small subunit (SSU) processome, composed of more than 70 proteins and the RNA chaperone small nucleolar RNA (snoRNA) U3. Interacts with CPEB1 and EIF4E.

Its subcellular location is the nucleus. It localises to the nucleolus. The protein localises to the chromosome. The protein resides in the centromere. It is found in the cytoplasm. Its subcellular location is the cell projection. It localises to the axon. The protein localises to the dendrite. The protein resides in the filopodium. Its function is as follows. Part of the small subunit (SSU) processome, first precursor of the small eukaryotic ribosomal subunit. During the assembly of the SSU processome in the nucleolus, many ribosome biogenesis factors, an RNA chaperone and ribosomal proteins associate with the nascent pre-rRNA and work in concert to generate RNA folding, modifications, rearrangements and cleavage as well as targeted degradation of pre-ribosomal RNA by the RNA exosome. Its dissociation from the complex determines the transition from state pre-A1 to state pre-A1*. Inhibits mRNA translation in a cytoplasmic polyadenylation element (CPE)-dependent manner. This is Neuroguidin from Homo sapiens (Human).